The sequence spans 55 residues: Photosystem II reaction center protein K (55 aa).

Positions 1–18 (MFYIHLENTFDLSSTILV) are excised as a propeptide. Residues 26-46 (IFDPIVDVMPIIPLFFFLLAF) traverse the membrane as a helical segment.

Belongs to the PsbK family. As to quaternary structure, PSII is composed of 1 copy each of membrane proteins PsbA, PsbB, PsbC, PsbD, PsbE, PsbF, PsbH, PsbI, PsbJ, PsbK, PsbL, PsbM, PsbT, PsbX, PsbY, PsbZ, Psb30/Ycf12, at least 3 peripheral proteins of the oxygen-evolving complex and a large number of cofactors. It forms dimeric complexes.

The protein resides in the plastid. It is found in the chloroplast thylakoid membrane. Functionally, one of the components of the core complex of photosystem II (PSII). PSII is a light-driven water:plastoquinone oxidoreductase that uses light energy to abstract electrons from H(2)O, generating O(2) and a proton gradient subsequently used for ATP formation. It consists of a core antenna complex that captures photons, and an electron transfer chain that converts photonic excitation into a charge separation. In Anthoceros angustus (Hornwort), this protein is Photosystem II reaction center protein K.